Reading from the N-terminus, the 247-residue chain is ATP synthase subunit a, chloroplastic (247 aa).

Helical transmembrane passes span 38 to 58, 95 to 115, 134 to 154, 199 to 219, and 220 to 240; these read QVLI…TLAV, VPFI…GALL, INTT…AGLS, LVVV…VMFL, and GLFT…AYIG.

It belongs to the ATPase A chain family. As to quaternary structure, F-type ATPases have 2 components, CF(1) - the catalytic core - and CF(0) - the membrane proton channel. CF(1) has five subunits: alpha(3), beta(3), gamma(1), delta(1), epsilon(1). CF(0) has four main subunits: a, b, b' and c.

It is found in the plastid. Its subcellular location is the chloroplast thylakoid membrane. Functionally, key component of the proton channel; it plays a direct role in the translocation of protons across the membrane. The sequence is that of ATP synthase subunit a, chloroplastic from Lemna minor (Common duckweed).